A 463-amino-acid chain; its full sequence is Lipase 6 (463 aa).

Residues 1–16 form the signal peptide; the sequence is MRDLILFLSLLHTIFA. Cys112 and Cys285 form a disulfide bridge. The active-site Charge relay system is Ser196. A glycan (N-linked (GlcNAc...) asparagine) is linked at Asn231. Residues Asp348 and His381 each act as charge relay system in the active site. Cys364 and Cys409 are disulfide-bonded. A glycan (N-linked (GlcNAc...) asparagine) is linked at Asn422.

It belongs to the AB hydrolase superfamily. Lipase family. Class Lip subfamily.

It localises to the secreted. The catalysed reaction is a triacylglycerol + H2O = a diacylglycerol + a fatty acid + H(+). Its function is as follows. Secreted lipase that is able to hydrolyze both the neutral triacylglycerols and the monopalmitate ester Tween 40, allowing the use of hydrolyzed products as carbon sources. Has broad lipolytic activity, which may be important for colonization and subsequent infection, therefore contributing to the persistence and virulence in human tissue. The polypeptide is Lipase 6 (Candida albicans (strain SC5314 / ATCC MYA-2876) (Yeast)).